We begin with the raw amino-acid sequence, 204 residues long: CASP-like protein 1B2 (204 aa).

The Cytoplasmic segment spans residues 1 to 28 (MASKGEEKPELVGSKQGIVSVTKAKHDQ). Residues 29 to 49 (IVLVLRVVAFLATASATIVMG) traverse the membrane as a helical segment. Over 50–80 (LNQETKTLLVGTIGTTPIRATLKAKFQHTPA) the chain is Extracellular. Residues 81 to 101 (FVFFVVANGLASVYNLVMLGV) form a helical membrane-spanning segment. Residues 102–114 (DVFGRKLDCKGLR) lie on the Cytoplasmic side of the membrane. A helical membrane pass occupies residues 115–135 (LVIISILDMVIVAVVAAGASS). Residues 136-168 (AAFMAELGKNGNSHAKWNKICDKFESFCHQGGG) lie on the Extracellular side of the membrane. The helical transmembrane segment at 169 to 189 (ALIPSFIALLLLFLISAISII) threads the bilayer. Residues 190 to 204 (TLHNQKLTSPHATTP) lie on the Cytoplasmic side of the membrane.

This sequence belongs to the Casparian strip membrane proteins (CASP) family. As to quaternary structure, homodimer and heterodimers.

Its subcellular location is the cell membrane. This chain is CASP-like protein 1B2, found in Vitis vinifera (Grape).